Here is a 242-residue protein sequence, read N- to C-terminus: DNA repair protein RecO (242 aa).

The protein belongs to the RecO family.

Its function is as follows. Involved in DNA repair and RecF pathway recombination. This Dechloromonas aromatica (strain RCB) protein is DNA repair protein RecO.